Reading from the N-terminus, the 451-residue chain is Probable plasmid replicative DNA helicase (451 aa).

An SF4 helicase domain is found at 194-451; it reads NDSFYDGLPT…SKFSAIKKVW (258 aa). Residue 225–232 coordinates ATP; that stretch reads ARPSIGKT.

Belongs to the helicase family. DnaB subfamily. As to quaternary structure, homohexamer.

The catalysed reaction is Couples ATP hydrolysis with the unwinding of duplex DNA at the replication fork by translocating in the 5'-3' direction. This creates two antiparallel DNA single strands (ssDNA). The leading ssDNA polymer is the template for DNA polymerase III holoenzyme which synthesizes a continuous strand.. The enzyme catalyses ATP + H2O = ADP + phosphate + H(+). Functionally, a replicative DNA helicase, it participates in initiation and elongation during DNA replication. Travels ahead of the DNA replisome, separating dsDNA into templates for DNA synthesis. A processive ATP-dependent 5'-3' DNA helicase it has DNA-dependent ATPase activity. This Chlamydia muridarum (strain MoPn / Nigg) protein is Probable plasmid replicative DNA helicase.